Here is a 236-residue protein sequence, read N- to C-terminus: Small ribosomal subunit protein uS2c (236 aa).

This sequence belongs to the universal ribosomal protein uS2 family.

The protein resides in the plastid. It localises to the chloroplast. This chain is Small ribosomal subunit protein uS2c (rps2), found in Saccharum hybrid (Sugarcane).